A 238-amino-acid chain; its full sequence is Ribitol-5-phosphate cytidylyltransferase 1 (238 aa).

Residues 7-10 (LAGG) and 81-87 (GSDRNDT) each bind CTP.

Belongs to the IspD/TarI cytidylyltransferase family. TarI subfamily.

The catalysed reaction is D-ribitol 5-phosphate + CTP + H(+) = CDP-L-ribitol + diphosphate. It participates in cell wall biogenesis; poly(ribitol phosphate) teichoic acid biosynthesis. Its function is as follows. Catalyzes the transfer of the cytidylyl group of CTP to D-ribitol 5-phosphate. This is Ribitol-5-phosphate cytidylyltransferase 1 from Staphylococcus aureus (strain USA300).